The following is a 1480-amino-acid chain: Tubulin-specific chaperone D (1480 aa).

Disordered regions lie at residues 1–32 and 453–476; these read MENSEDISLNSSEKSIESSVVNLEDQQQSQQQ and NNNNNNNNNENNNEEGEEEEEEIP. Composition is skewed to low complexity over residues 7–32 and 453–463; these read ISLNSSEKSIESSVVNLEDQQQSQQQ and NNNNNNNNNEN. Over residues 464–476 the composition is skewed to acidic residues; the sequence is NNEEGEEEEEEIP. Residues 482 to 520 form an HEAT 1 repeat; sequence ILEEIMKSLKDKDTIIRWTSAKAIGRIVNLLPKDMGDQV. The tract at residues 859–880 is disordered; the sequence is KPIITPPSSKSTTNNNNNNNNN. One copy of the HEAT 2 repeat lies at 886–922; it reads EIAFNIILGYLNENLNHPNEEVQKEASKAFELLFSKY. Residues 1437–1480 are disordered; sequence NPHKQSDDNNNNNNGELINNNTENNNNNNFDDNLPEDSQDLMEI. Low complexity predominate over residues 1444–1468; that stretch reads DNNNNNNGELINNNTENNNNNNFDD. Over residues 1469–1480 the composition is skewed to acidic residues; that stretch reads NLPEDSQDLMEI.

Belongs to the TBCD family. Supercomplex made of cofactors A to E. Cofactors A and D function by capturing and stabilizing tubulin in a quasi-native conformation. Cofactor E binds to the cofactor D-tubulin complex; interaction with cofactor C then causes the release of tubulin polypeptides that are committed to the native state.

Its function is as follows. Tubulin-folding protein; involved in the first step of the tubulin folding pathway. The chain is Tubulin-specific chaperone D (tbcd) from Dictyostelium discoideum (Social amoeba).